The following is a 259-amino-acid chain: Probable metal transport system ATP-binding protein CT_068 (259 aa).

The ABC transporter domain occupies Trp9–Leu241. Gly41–Ser48 is an ATP binding site.

This sequence belongs to the ABC transporter superfamily.

The protein localises to the cell inner membrane. Part of an ATP-driven transport system CT_067/CT_068/CT_069/CT_070 for a metal. Probably responsible for energy coupling to the transport system. In Chlamydia trachomatis serovar D (strain ATCC VR-885 / DSM 19411 / UW-3/Cx), this protein is Probable metal transport system ATP-binding protein CT_068.